A 417-amino-acid polypeptide reads, in one-letter code: UDP-N-acetylmuramoylalanine--D-glutamate ligase (417 aa).

108-114 contributes to the ATP binding site; the sequence is GSNGKTT.

The protein belongs to the MurCDEF family.

It localises to the cytoplasm. The catalysed reaction is UDP-N-acetyl-alpha-D-muramoyl-L-alanine + D-glutamate + ATP = UDP-N-acetyl-alpha-D-muramoyl-L-alanyl-D-glutamate + ADP + phosphate + H(+). The protein operates within cell wall biogenesis; peptidoglycan biosynthesis. Its function is as follows. Cell wall formation. Catalyzes the addition of glutamate to the nucleotide precursor UDP-N-acetylmuramoyl-L-alanine (UMA). This Chlamydia pneumoniae (Chlamydophila pneumoniae) protein is UDP-N-acetylmuramoylalanine--D-glutamate ligase.